We begin with the raw amino-acid sequence, 266 residues long: 3-methyl-2-oxobutanoate hydroxymethyltransferase (266 aa).

Residues Asp45 and Asp84 each coordinate Mg(2+). Residues 45 to 46, Asp84, and Lys112 each bind 3-methyl-2-oxobutanoate; that span reads DS. A Mg(2+)-binding site is contributed by Glu114. Glu181 acts as the Proton acceptor in catalysis.

It belongs to the PanB family. Homodecamer; pentamer of dimers. Mg(2+) is required as a cofactor.

It is found in the cytoplasm. It carries out the reaction 3-methyl-2-oxobutanoate + (6R)-5,10-methylene-5,6,7,8-tetrahydrofolate + H2O = 2-dehydropantoate + (6S)-5,6,7,8-tetrahydrofolate. It participates in cofactor biosynthesis; (R)-pantothenate biosynthesis; (R)-pantoate from 3-methyl-2-oxobutanoate: step 1/2. Its function is as follows. Catalyzes the reversible reaction in which hydroxymethyl group from 5,10-methylenetetrahydrofolate is transferred onto alpha-ketoisovalerate to form ketopantoate. The polypeptide is 3-methyl-2-oxobutanoate hydroxymethyltransferase (Pseudomonas syringae pv. tomato (strain ATCC BAA-871 / DC3000)).